A 186-amino-acid polypeptide reads, in one-letter code: Transposon Tn21 resolvase (186 aa).

Positions 4 to 137 (QRIGYIRVST…EGIALAKQRG (134 aa)) constitute a Resolvase/invertase-type recombinase catalytic domain. Serine 12 (O-(5'-phospho-DNA)-serine intermediate) is an active-site residue. A DNA-binding region (H-T-H motif) is located at residues 164–183 (KTKLAREFGISRETLYQYLR).

Belongs to the site-specific recombinase resolvase family.

Functionally, resolvase catalyzes the resolution (a site-specific recombination) of the cointegrated replicon to yield the final transposition products. This is Transposon Tn21 resolvase (tnpR) from Escherichia coli.